We begin with the raw amino-acid sequence, 156 residues long: Endoribonuclease YbeY (156 aa).

The Zn(2+) site is built by His-122, His-126, and His-132.

It belongs to the endoribonuclease YbeY family. The cofactor is Zn(2+).

It is found in the cytoplasm. In terms of biological role, single strand-specific metallo-endoribonuclease involved in late-stage 70S ribosome quality control and in maturation of the 3' terminus of the 16S rRNA. The sequence is that of Endoribonuclease YbeY from Pediococcus pentosaceus (strain ATCC 25745 / CCUG 21536 / LMG 10740 / 183-1w).